We begin with the raw amino-acid sequence, 159 residues long: FCS-Like Zinc finger 2 (159 aa).

An FLZ-type zinc finger spans residues 75 to 119 (HFLDSCFLCKKRLGDNRDIFMYRGDTPFCSEECREEQIERDEAKE). Residues 113 to 122 (ERDEAKEKKQ) show a composition bias toward basic and acidic residues. A disordered region spans residues 113–159 (ERDEAKEKKQSLSTSVKAMRRNEKRSSSSSPTRSRNYAFRTGTVAAA).

It belongs to the FLZ family. As to quaternary structure, interacts with KIN10 and KIN11 via its FLZ-type zinc finger domain. Interacts with KINB1, KINB2, KINB3 and SNF4 via its N-terminal part. Forms heterodimer with FLZ7, FLZ10, FLZ11, FLZ12, FLZ15, FLZ17 and FLZ18 in vitro.

In terms of biological role, may act as an adapter to facilitate the interaction of SnRK1 complex with effector proteins, conferring tissue- and stimulus-type specific differences in the SnRK1 regulation pathway. The protein is FCS-Like Zinc finger 2 of Arabidopsis thaliana (Mouse-ear cress).